A 231-amino-acid polypeptide reads, in one-letter code: Ribosyldihydronicotinamide dehydrogenase [quinone] (231 aa).

FAD contacts are provided by residues H12 and 18 to 21; that span reads FNGS. S80 is modified (phosphoserine). 104-107 contributes to the FAD binding site; it reads LYWF. 127 to 129 is a substrate binding site; the sequence is FDI. Residues 148-151 and Y156 each bind FAD; that span reads TTGG. Zn(2+)-binding residues include H174 and H178. FAD is bound at residue E194. S197 is subject to Phosphoserine. R201 contributes to the FAD binding site. A Zn(2+)-binding site is contributed by C223.

This sequence belongs to the NAD(P)H dehydrogenase (quinone) family. Homodimer. Zn(2+) serves as cofactor. The cofactor is FAD.

The protein resides in the cytoplasm. It carries out the reaction 1-(beta-D-ribofuranosyl)-1,4-dihydronicotinamide + a quinone + H(+) = beta-nicotinamide D-riboside + a quinol. Its activity is regulated as follows. Inhibited by melatonin, resveratrol and 5-hydroxytryptamine. The enzyme apparently serves as a quinone reductase in connection with conjugation reactions of hydroquinones involved in detoxification pathways as well as in biosynthetic processes such as the vitamin K-dependent gamma-carboxylation of glutamate residues in prothrombin synthesis. The protein is Ribosyldihydronicotinamide dehydrogenase [quinone] (NQO2) of Homo sapiens (Human).